The following is a 21-amino-acid chain: Major outer membrane protein (21 aa).

In terms of assembly, disulfide bond interactions within and between MOMP molecules and other components form high molecular-weight oligomers.

The protein resides in the cell outer membrane. In terms of biological role, structural rigidity of the outer membrane of elementary bodies and porin forming, permitting diffusion of solutes through the intracellular reticulate body membrane. The sequence is that of Major outer membrane protein from Actinobacillus equuli.